The primary structure comprises 531 residues: Multidrug resistance protein fnx1 (531 aa).

Residues 1–30 (MVDQVNLATEQTSLLYPEVSRKKEELSVNK) are Cytoplasmic-facing. The chain crosses the membrane as a helical span at residues 31 to 51 (WTILPALWVGGFLSALDMTIV). Over 52 to 225 (ASLYPVIGSE…NASLLSRIDY (174 aa)) the chain is Lumenal. A helical membrane pass occupies residues 226–246 (LGSFLLVTGITALVVTFNMGG). Over 247–252 (DAFPWV) the chain is Cytoplasmic. Residues 253-273 (SPVIITLLVSSVLILFAFYWV) traverse the membrane as a helical segment. At 274-297 (EKNIAVEPIAPVEILSQPTPLNVC) the chain is on the lumenal side. The helical transmembrane segment at 298–318 (LGNFFNAFCSFVIVYELPLFF) threads the bilayer. At 319-360 (ETTLLMPSSEAGVRIFPYVISTSVGSLCSGLYMKKTGRYRNL) the chain is on the cytoplasmic side. Residues 361–381 (VIAGFFFMLMGIVSFAVLTSF) traverse the membrane as a helical segment. Topologically, residues 382 to 385 (GHRT) are lumenal. A helical membrane pass occupies residues 386 to 406 (PLILISLCLAMTGCSYGMNLT). At 407-496 (STLIAIISSL…QKLVIKSYAT (90 aa)) the chain is on the cytoplasmic side. The chain crosses the membrane as a helical span at residues 497-517 (AFTWTFALVAIIAFAGFWCSL). Residues 518 to 531 (RIKQFYLHTSVDRS) are Lumenal-facing.

This sequence belongs to the major facilitator superfamily.

It localises to the vacuole membrane. In terms of biological role, efflux transporter. Confers resistance to a variety of toxic compounds. In Schizosaccharomyces pombe (strain 972 / ATCC 24843) (Fission yeast), this protein is Multidrug resistance protein fnx1 (fnx1).